We begin with the raw amino-acid sequence, 79 residues long: Ponericin-W-like 32.1 (79 aa).

Positions 1–23 (MKCKKQLLVIFFAYFLVVNESEA) are cleaved as a signal peptide. A propeptide spanning residues 49–79 (RALMKRDLEDIMDPYQKNLKLDRYLRRLAMD) is cleaved from the precursor.

Belongs to the non-disulfide-bridged peptide (NDBP) superfamily. Medium-length antimicrobial peptide (group 3) family. Ponericin-W subfamily. In terms of tissue distribution, expressed by the venom gland.

The protein resides in the secreted. It is found in the target cell membrane. In terms of biological role, antimicrobial peptide with potent activity against a range of Gram-positive and Gram-negative bacteria. Has high hemolytic activity against erythrocytes. May act by disrupting the integrity of the bacterial cell membrane. In Lychas mucronatus (Chinese swimming scorpion), this protein is Ponericin-W-like 32.1.